Reading from the N-terminus, the 161-residue chain is Small ribosomal subunit protein uS9 (161 aa).

This sequence belongs to the universal ribosomal protein uS9 family.

The sequence is that of Small ribosomal subunit protein uS9 (rpsI) from Rickettsia prowazekii (strain Madrid E).